A 480-amino-acid polypeptide reads, in one-letter code: Cysteine--tRNA ligase (480 aa).

Cysteine 29 lines the Zn(2+) pocket. The 'HIGH' region motif lies at 31–41 (VTVYDHCHIGH). Cysteine 209, histidine 234, and glutamate 238 together coordinate Zn(2+). The 'KMSKS' region signature appears at 266–270 (KMSKS). Lysine 269 is a binding site for ATP.

Belongs to the class-I aminoacyl-tRNA synthetase family. In terms of assembly, monomer. Requires Zn(2+) as cofactor.

The protein localises to the cytoplasm. It carries out the reaction tRNA(Cys) + L-cysteine + ATP = L-cysteinyl-tRNA(Cys) + AMP + diphosphate. The chain is Cysteine--tRNA ligase from Geobacter sp. (strain M21).